The sequence spans 517 residues: Probable anion transporter 6, chloroplastic (517 aa).

Residues 51 to 73 (TERVRESKKLPPKDPIEDPKPQL) are disordered. Basic and acidic residues predominate over residues 52-70 (ERVRESKKLPPKDPIEDPK). The next 10 membrane-spanning stretches (helical) occupy residues 130–150 (FGWSSSVAGLVQSSFFWGYAL), 170–190 (IGVFTWSFATALVPLLAGFMP), 229–249 (FVFGGLSLGSVMGLLLAPPII), 255–275 (ESVFYLFGLLGVGWFVGFQFL), 312–332 (SFFQSPAVWAMIYTHFCGSWG), 352–372 (LTEAAWVSILPPLASIVVTSL), 397–417 (IAFVAPAICMTLSSVDIGLPP), 420–440 (IVGILTAGLALSSFALSGLYC), 452–472 (ILLGITNTVGAVPGIVGVALT), and 484–504 (MSLFVPSIFFYLTGTVVWLAF).

This sequence belongs to the major facilitator superfamily. Sodium/anion cotransporter (TC 2.A.1.14) family. In terms of tissue distribution, expressed in leaf veins and sepals.

It is found in the plastid. It localises to the chloroplast membrane. Inorganic phosphate and probable anion transporter. This Arabidopsis thaliana (Mouse-ear cress) protein is Probable anion transporter 6, chloroplastic (ANTR6).